We begin with the raw amino-acid sequence, 165 residues long: NADPH-dependent 7-cyano-7-deazaguanine reductase (165 aa).

The active-site Thioimide intermediate is cysteine 56. Aspartate 63 serves as the catalytic Proton donor. Substrate contacts are provided by residues 78–80 and 97–98; these read VES and HE.

The protein belongs to the GTP cyclohydrolase I family. QueF type 1 subfamily.

Its subcellular location is the cytoplasm. The enzyme catalyses 7-aminomethyl-7-carbaguanine + 2 NADP(+) = 7-cyano-7-deazaguanine + 2 NADPH + 3 H(+). Its pathway is tRNA modification; tRNA-queuosine biosynthesis. Its function is as follows. Catalyzes the NADPH-dependent reduction of 7-cyano-7-deazaguanine (preQ0) to 7-aminomethyl-7-deazaguanine (preQ1). The polypeptide is NADPH-dependent 7-cyano-7-deazaguanine reductase (Bacillus thuringiensis subsp. konkukian (strain 97-27)).